The chain runs to 191 residues: Protein GrpE (191 aa).

2 stretches are compositionally biased toward basic and acidic residues: residues 1–19 (MKDEHNQEHDHLSPKEPES) and 29–45 (QQGEEKQEASEKEGEIK). Residues 1–45 (MKDEHNQEHDHLSPKEPESYQKAYACKEQQGEEKQEASEKEGEIK) are disordered.

This sequence belongs to the GrpE family. In terms of assembly, homodimer.

It is found in the cytoplasm. Functionally, participates actively in the response to hyperosmotic and heat shock by preventing the aggregation of stress-denatured proteins, in association with DnaK and GrpE. It is the nucleotide exchange factor for DnaK and may function as a thermosensor. Unfolded proteins bind initially to DnaJ; upon interaction with the DnaJ-bound protein, DnaK hydrolyzes its bound ATP, resulting in the formation of a stable complex. GrpE releases ADP from DnaK; ATP binding to DnaK triggers the release of the substrate protein, thus completing the reaction cycle. Several rounds of ATP-dependent interactions between DnaJ, DnaK and GrpE are required for fully efficient folding. The polypeptide is Protein GrpE (Helicobacter pylori (strain J99 / ATCC 700824) (Campylobacter pylori J99)).